The following is a 115-amino-acid chain: Large ribosomal subunit protein bL31B (115 aa).

The protein belongs to the bacterial ribosomal protein bL31 family. Type B subfamily. In terms of assembly, part of the 50S ribosomal subunit.

The chain is Large ribosomal subunit protein bL31B from Polynucleobacter necessarius subsp. necessarius (strain STIR1).